A 496-amino-acid chain; its full sequence is Probable cytosol aminopeptidase (496 aa).

Mn(2+)-binding residues include Lys-262 and Asp-267. Lys-274 is an active-site residue. Mn(2+)-binding residues include Asp-285, Asp-344, and Glu-346. The active site involves Arg-348.

Belongs to the peptidase M17 family. The cofactor is Mn(2+).

It is found in the cytoplasm. It carries out the reaction Release of an N-terminal amino acid, Xaa-|-Yaa-, in which Xaa is preferably Leu, but may be other amino acids including Pro although not Arg or Lys, and Yaa may be Pro. Amino acid amides and methyl esters are also readily hydrolyzed, but rates on arylamides are exceedingly low.. The catalysed reaction is Release of an N-terminal amino acid, preferentially leucine, but not glutamic or aspartic acids.. In terms of biological role, presumably involved in the processing and regular turnover of intracellular proteins. Catalyzes the removal of unsubstituted N-terminal amino acids from various peptides. This is Probable cytosol aminopeptidase from Rhizobium etli (strain CIAT 652).